The following is a 694-amino-acid chain: Soluble starch synthase 2-2, chloroplastic/amyloplastic (694 aa).

A chloroplast-targeting transit peptide spans 1–15 (MSGAIASSPAATLFL). The tract at residues 93–197 (KADHVEDSVS…DSENKESGPL (105 aa)) is disordered. Over residues 127-142 (APVSKPKVDPSVPASK) the composition is skewed to low complexity. The span at 156–176 (AALDKKEDVGVAEPLEAKADA) shows a compositional bias: basic and acidic residues. The segment covering 177–186 (GGDAGAVSSA) has biased composition (low complexity). Lys217 is an ADP-alpha-D-glucose binding site.

Belongs to the glycosyltransferase 1 family. Bacterial/plant glycogen synthase subfamily. In terms of tissue distribution, expressed in leaves and weakly in endosperm and roots.

Its subcellular location is the plastid. It is found in the amyloplast. It localises to the chloroplast. It catalyses the reaction [(1-&gt;4)-alpha-D-glucosyl](n) + ADP-alpha-D-glucose = [(1-&gt;4)-alpha-D-glucosyl](n+1) + ADP + H(+). It participates in glycan biosynthesis; starch biosynthesis. Functionally, may contribute to the deposition of transient starch in chloroplasts of leaves. This is Soluble starch synthase 2-2, chloroplastic/amyloplastic (SSII-2) from Oryza sativa subsp. japonica (Rice).